A 407-amino-acid chain; its full sequence is Lysine racemase (407 aa).

The signal sequence occupies residues 1–18; sequence MSLGIRYLALLPLFVITA. The N-palmitoyl cysteine moiety is linked to residue cysteine 19. Cysteine 19 carries S-diacylglycerol cysteine lipidation. Cysteines 70 and 96 form a disulfide. The Proton acceptor role is filled by lysine 74. Lysine 74 is modified (N6-(pyridoxal phosphate)lysine). Arginine 173 contacts substrate. Residue tyrosine 299 is the Proton acceptor of the active site. Methionine 347 is a substrate binding site.

Belongs to the alanine racemase family. Bsr subfamily. In terms of assembly, forms a head-to-tail homodimer in the structure. Pyridoxal 5'-phosphate is required as a cofactor.

It is found in the cell membrane. It localises to the periplasm. The enzyme catalyses L-lysine = D-lysine. The catalysed reaction is L-arginine = D-arginine. The racemization activity of Lyr is completely inhibited by hydroxylamine. Functionally, amino-acid racemase that catalyzes the interconversion of L-lysine and D-lysine. To a lesser extent, is also able to interconvert arginine enantiomers. Cannot use methionine, asparagine, alanine, leucine, glutamine, phenylalanine and histidine as substrates. This chain is Lysine racemase, found in Proteus mirabilis.